The following is a 95-amino-acid chain: MSRSSKKGPYVDIKLLDKIEAMNKANEKRAIRTWSRDSTIFPQMIGHTILVHDGRRHVPVYITENMVGHKLGEFAPTRFFRGHGGKKADKRGKVK.

The protein belongs to the universal ribosomal protein uS19 family.

Functionally, protein S19 forms a complex with S13 that binds strongly to the 16S ribosomal RNA. This chain is Small ribosomal subunit protein uS19, found in Chloroflexus aggregans (strain MD-66 / DSM 9485).